A 505-amino-acid polypeptide reads, in one-letter code: MSYSLLFLLALQFCLGSASRTTLTSAHSRELTTPPTSPQATAAWLPPGGTSWAEGGTVSQPLSNFTGSVDSHGTCQCSVSLPDTAFPADRVERLEYTAHILSQKFEREFSKVKEYVQLISVYEKRLLNLTVRVEVMEKDSISYTELDFELIKLEVKEMQKLVLQLKKNFVGSTHIIDMLEVEIRNMTLLVEKLESLDQNNVLSIRRQILALKTKLKECEASKSDLVPATPPPPAPGSCSHGGVVNISAPSVIQLNWLGFSYKYGAWGRDYSPQHPERTLYWVAPLNTDARALEYYRLYDSLDNLLIYSHFRDYRIRYGQGGGTVAFNNNLYVNWYNGGNIAKINLTTNVVDVNRPLPLAAYNNRFSYANVNWQDIDLAVDEQALWAIYATEASTGNIVISKLNDTTLEVISTWVTKQYKPSVSNAFMVCGVLYATRTLNTKTEEIFYYYDTNTEREGNLGITMRKMQERIQSINYHPFDQKLYVYNDGYLLNYDLVFLQTPRQPV.

The N-terminal stretch at 1-18 (MSYSLLFLLALQFCLGSA) is a signal peptide. 2 N-linked (GlcNAc...) asparagine glycosylation sites follow: Asn-64 and Asn-128. Positions 174 to 225 (HIIDMLEVEIRNMTLLVEKLESLDQNNVLSIRRQILALKTKLKECEASKSDL) form a coiled coil. The 263-residue stretch at 237 to 499 (SCSHGGVVNI…LLNYDLVFLQ (263 aa)) folds into the Olfactomedin-like domain. The cysteines at positions 238 and 429 are disulfide-linked.

Homomultimer; disulfide-linked. Interacts with NDUFA13. Interacts with cell surface lectins (locutions ricinus communis agglutinin I, concanavalin A and wheat germ agglutinin) and cadherin. In terms of processing, N-glycosylated.

Its subcellular location is the secreted. The protein resides in the extracellular space. It is found in the mitochondrion. Its function is as follows. May promote proliferation of pancreatic cancer cells by favoring the transition from the S to G2/M phase. In myeloid leukemic cell lines, inhibits cell growth and induces cell differentiation and apoptosis. May play a role in the inhibition of EIF4EBP1 phosphorylation/deactivation. Facilitates cell adhesion, most probably through interaction with cell surface lectins and cadherin. This chain is Olfactomedin-4 (Olfm4), found in Mus musculus (Mouse).